The primary structure comprises 311 residues: Olfactory receptor 52J3 (311 aa).

The Extracellular segment spans residues 1–27; the sequence is MFYHNKSIFHPVTFFLIGIPGLEDFHM. A glycan (N-linked (GlcNAc...) asparagine) is linked at N5. A helical transmembrane segment spans residues 28-48; it reads WISGPFCSVYLVALLGNATIL. Over 49–56 the chain is Cytoplasmic; it reads LVIKVEQT. A helical transmembrane segment spans residues 57–77; that stretch reads LREPMFYFLAILSTIDLALST. Residues 78–101 lie on the Extracellular side of the membrane; the sequence is TSVPRMLGIFWFDAHEINYGACVA. C99 and C191 are disulfide-bonded. Residues 102–122 traverse the membrane as a helical segment; that stretch reads QMFLIHAFTGMEAEVLLAMAF. Residues 123 to 141 lie on the Cytoplasmic side of the membrane; sequence DRYVAVCAPLHYATILTSQ. Residues 142 to 162 traverse the membrane as a helical segment; that stretch reads VLVGISMCIVIRPVLLTLPMV. The Extracellular portion of the chain corresponds to 163–198; that stretch reads YLIYRLPFCQAHIIAHSYCEHMGIAKLSCGNIRING. Residues 199 to 218 traverse the membrane as a helical segment; that stretch reads IYGLFVVSFFVLNLVLIGIS. The Cytoplasmic portion of the chain corresponds to 219 to 238; the sequence is YVYILRAVFRLPSHDAQLKA. Residues 239 to 259 traverse the membrane as a helical segment; the sequence is LSTCGAHVGVICVFYIPSVFS. Residues 260-274 are Extracellular-facing; sequence FLTHRFGHQIPGYIH. Residues 275 to 295 form a helical membrane-spanning segment; the sequence is ILVANLYLIIPPSLNPIIYGV. Residues 296 to 311 are Cytoplasmic-facing; the sequence is RTKQIRERVLYVFTKK.

Belongs to the G-protein coupled receptor 1 family.

The protein resides in the cell membrane. Its function is as follows. Odorant receptor. This Homo sapiens (Human) protein is Olfactory receptor 52J3 (OR52J3).